The following is a 377-amino-acid chain: tRNA pseudouridine synthase B (377 aa).

Asp-53 (nucleophile) is an active-site residue.

It belongs to the pseudouridine synthase TruB family. Type 1 subfamily.

It catalyses the reaction uridine(55) in tRNA = pseudouridine(55) in tRNA. Its function is as follows. Responsible for synthesis of pseudouridine from uracil-55 in the psi GC loop of transfer RNAs. The chain is tRNA pseudouridine synthase B from Tropheryma whipplei (strain Twist) (Whipple's bacillus).